The sequence spans 400 residues: Mu-type opioid receptor (400 aa).

Residues 1–68 are Extracellular-facing; it reads MDSSAVPTNA…CPPTGSPSMI (68 aa). Asn9, Asn12, Asn33, Asn40, and Asn48 each carry an N-linked (GlcNAc...) asparagine glycan. The chain crosses the membrane as a helical span at residues 69 to 93; it reads TAITIMALYSIVCVVGLFGNFLVMY. Residues 94–106 are Cytoplasmic-facing; the sequence is VIVRYTKMKTATN. A helical transmembrane segment spans residues 107–131; sequence IYIFNLALADALVTSTLPFQSVNYL. Residues 132–142 lie on the Extracellular side of the membrane; that stretch reads MGTWPFGTILC. A disulfide bridge links Cys142 with Cys219. Residues 143–165 traverse the membrane as a helical segment; the sequence is KIVISIDYYNMSTSIFTLCTMSV. The Cytoplasmic segment spans residues 166–185; it reads DRYIAVCHPVKALDFRTPRN. Phosphotyrosine is present on Tyr168. Residues 186-207 traverse the membrane as a helical segment; that stretch reads AKIINVCNWILSSAIGLPVMFM. The Extracellular segment spans residues 208–230; the sequence is ATTKYRQGSIDCTLTFSHPSWYW. Residues 231 to 255 traverse the membrane as a helical segment; the sequence is ENLLKICVFIFAFIMPVLIITVCYG. Residues 256 to 283 lie on the Cytoplasmic side of the membrane; sequence LMILRLKSVRMLSGSKEKDRNLRRITRM. Residues 284-306 traverse the membrane as a helical segment; that stretch reads VLVVVAVFIICWTPIHIYVIIKA. The Extracellular segment spans residues 307–314; sequence LVTIPETT. Residues 315–338 form a helical membrane-spanning segment; that stretch reads FQTVSWHFCIALGYTNSCLNPVLY. The short motif at 334–338 is the NPxxY; plays a role in stabilizing the activated conformation of the receptor element; sequence NPVLY. Residues 339–400 are Cytoplasmic-facing; the sequence is AFLDEDFKRC…NLEAETAPLP (62 aa). Cys353 carries the S-palmitoyl cysteine lipid modification. The interval 364–386 is disordered; that stretch reads NSTRIRQNTRDHPSTANTVDRTN. The residue at position 365 (Ser365) is a Phosphoserine. Thr372 carries the phosphothreonine modification. Ser377 is subject to Phosphoserine. Thr396 carries the post-translational modification Phosphothreonine.

Belongs to the G-protein coupled receptor 1 family. Forms homooligomers and heterooligomers with other GPCRs, such as OPRD1, OPRK1, OPRL1, NPFFR2, ADRA2A, SSTR2, CNR1 and CCR5 (probably in dimeric forms). Interacts with heterotrimeric G proteins; interaction with a heterotrimeric complex containing GNAI1, GNB1 and GNG2 stabilizes the active conformation of the receptor and increases its affinity for endomorphin-2, the synthetic opioid peptide DAMGO and for morphinan agonists. Interacts with PPL; the interaction disrupts agonist-mediated G-protein activation. Interacts (via C-terminus) with DNAJB4 (via C-terminus). Interacts with calmodulin; the interaction inhibits the constitutive activity of OPRM1; it abolishes basal and attenuates agonist-stimulated G-protein coupling. Interacts with FLNA, PLD2, RANBP9 and WLS and GPM6A. Interacts with RTP4. Interacts with SYP and GNAS. Interacts with RGS9, RGS17, RGS20, RGS4, PPP1R9B and HINT1. In terms of processing, phosphorylated. Differentially phosphorylated in basal and agonist-induced conditions. Agonist-mediated phosphorylation modulates receptor internalization. Phosphorylated by GRK2 in a agonist-dependent manner. Phosphorylation at Tyr-168 requires receptor activation, is dependent on non-receptor protein tyrosine kinase Src and results in a decrease in agonist efficacy by reducing G-protein coupling efficiency. Phosphorylated on tyrosine residues; the phosphorylation is involved in agonist-induced G-protein-independent receptor down-regulation. Phosphorylation at Ser-377 is involved in G-protein-dependent but not beta-arrestin-dependent activation of the ERK pathway. Post-translationally, ubiquitinated. A basal ubiquitination seems not to be related to degradation. Ubiquitination is increased upon formation of OPRM1:OPRD1 oligomers leading to proteasomal degradation; the ubiquitination is diminished by RTP4.

It is found in the cell membrane. The protein localises to the cell projection. The protein resides in the axon. It localises to the perikaryon. Its subcellular location is the dendrite. It is found in the endosome. Receptor for endogenous opioids such as beta-endorphin and endomorphin. Receptor for natural and synthetic opioids including morphine, heroin, DAMGO, fentanyl, etorphine, buprenorphin and methadone. Also activated by enkephalin peptides, such as Met-enkephalin or Met-enkephalin-Arg-Phe, with higher affinity for Met-enkephalin-Arg-Phe. Agonist binding to the receptor induces coupling to an inactive GDP-bound heterotrimeric G-protein complex and subsequent exchange of GDP for GTP in the G-protein alpha subunit leading to dissociation of the G-protein complex with the free GTP-bound G-protein alpha and the G-protein beta-gamma dimer activating downstream cellular effectors. The agonist- and cell type-specific activity is predominantly coupled to pertussis toxin-sensitive G(i) and G(o) G alpha proteins, GNAI1, GNAI2, GNAI3 and GNAO1, and to a lesser extent to pertussis toxin-insensitive G alpha proteins GNAZ and GNA15. They mediate an array of downstream cellular responses, including inhibition of adenylate cyclase activity and both N-type and L-type calcium channels, activation of inward rectifying potassium channels, mitogen-activated protein kinase (MAPK), phospholipase C (PLC), phosphoinositide/protein kinase (PKC), phosphoinositide 3-kinase (PI3K) and regulation of NF-kappa-B. Also couples to adenylate cyclase stimulatory G alpha proteins. The selective temporal coupling to G-proteins and subsequent signaling can be regulated by RGSZ proteins, such as RGS9, RGS17 and RGS4. Phosphorylation by members of the GPRK subfamily of Ser/Thr protein kinases and association with beta-arrestins is involved in short-term receptor desensitization. Beta-arrestins associate with the GPRK-phosphorylated receptor and uncouple it from the G-protein thus terminating signal transduction. The phosphorylated receptor is internalized through endocytosis via clathrin-coated pits which involves beta-arrestins. The activation of the ERK pathway occurs either in a G-protein-dependent or a beta-arrestin-dependent manner and is regulated by agonist-specific receptor phosphorylation. Acts as a class A G-protein coupled receptor (GPCR) which dissociates from beta-arrestin at or near the plasma membrane and undergoes rapid recycling. Receptor down-regulation pathways are varying with the agonist and occur dependent or independent of G-protein coupling. Endogenous ligands induce rapid desensitization, endocytosis and recycling. Heterooligomerization with other GPCRs can modulate agonist binding, signaling and trafficking properties. Involved in neurogenesis. The sequence is that of Mu-type opioid receptor (OPRM1) from Macaca mulatta (Rhesus macaque).